We begin with the raw amino-acid sequence, 614 residues long: V-type proton ATPase catalytic subunit A isoform 2 (614 aa).

S142 is subject to Phosphoserine. 247 to 254 contacts ATP; sequence GAFGCGKT.

It belongs to the ATPase alpha/beta chains family. In terms of assembly, V-ATPase is a heteromultimeric enzyme made up of two complexes: the ATP-hydrolytic V1 complex and the proton translocation V0 complex. The V1 complex consists of three catalytic AB heterodimers that form a heterohexamer, three peripheral stalks each consisting of EG heterodimers, one central rotor including subunits D and F, and the regulatory subunits C and H. The proton translocation complex V0 consists of the proton transport subunit a, a ring of proteolipid subunits c9c'', rotary subunit d, subunits e and f, and the accessory subunits VhaAC45 and ATP6AP2.

It carries out the reaction ATP + H2O + 4 H(+)(in) = ADP + phosphate + 5 H(+)(out). Its activity is regulated as follows. ATP hydrolysis occurs at the interface between the nucleotide-binding domains of subunits A and B. ATP hydrolysis triggers a conformational change in the subunits D and F, which induces a shift of subunit d. The c-ring is subsequently rotated and results in a continuous proton translocation across the membrane. Functionally, catalytic subunit of the V1 complex of vacuolar(H+)-ATPase (V-ATPase), a multisubunit enzyme composed of a peripheral complex (V1) that hydrolyzes ATP and a membrane integral complex (V0) that translocates protons. V-ATPase is responsible for acidifying and maintaining the pH of intracellular compartments and in some cell types, is targeted to the plasma membrane, where it is responsible for acidifying the extracellular environment. This Drosophila melanogaster (Fruit fly) protein is V-type proton ATPase catalytic subunit A isoform 2 (Vha68-2).